The sequence spans 316 residues: WEB family protein At3g13190 (316 aa).

Coiled coils occupy residues 42–90, 119–195, and 233–266; these read WNKE…MIND, EEES…AEEH, and RDET…MAQE. The segment at 295–316 is disordered; that stretch reads STKEVLKSKPRSSSKEGCLVKC.

Belongs to the WEB family.

In Arabidopsis thaliana (Mouse-ear cress), this protein is WEB family protein At3g13190.